We begin with the raw amino-acid sequence, 523 residues long: Tryptophan 6-halogenase SttH (523 aa).

FAD-binding residues include glycine 14, serine 40, isoleucine 43, valine 46, valine 48, and alanine 51. The active site involves lysine 79. Proline 97 contacts L-tryptophan. Positions 203 and 354 each coordinate FAD. Residues threonine 365 and glycine 366 each contribute to the chloride site. Isoleucine 367 is an FAD binding site. L-tryptophan is bound by residues tyrosine 456 and tyrosine 457.

The protein belongs to the flavin-dependent halogenase family. Bacterial tryptophan halogenase subfamily. As to quaternary structure, homodimer.

It carries out the reaction L-tryptophan + FADH2 + chloride + O2 = 6-chloro-L-tryptophan + FAD + 2 H2O. It catalyses the reaction D-tryptophan + FADH2 + chloride + O2 = 6-chloro-D-tryptophan + FAD + 2 H2O. Functionally, catalyzes the chlorination of tryptophan (Trp) at C6 position to yield 6-chloro-tryptophan. Accepts both L and D-Trp as the substrates. The enzyme also uses bromide to yield 6-bromo-Trp. In vitro, can also catalyze the halogenation of 3-indolepropionic acid, N-methyltryptophan and non-indolic aromatic substrates such as kynurenine, anthranilamide and N-phenylanthranilic acid. The sequence is that of Tryptophan 6-halogenase SttH from Streptomyces toxytricini (Actinomyces toxytricini).